The sequence spans 134 residues: Early E3B 14.5 kDa protein (134 aa).

Residues 1 to 21 (MQAMLPVILILLLPCIPLAST) form the signal peptide. The chain crosses the membrane as a helical span at residues 54–78 (YWIVIVGIINILSCTFFSITIYPTF).

Belongs to the adenoviridae E3_14 family. In terms of processing, phosphorylated on serine; O-glycosylated, but not N-glycosylated.

It is found in the host membrane. Its function is as follows. Down-regulates the EGF receptor and prevents cytolysis by TNF. The chain is Early E3B 14.5 kDa protein from Homo sapiens (Human).